The chain runs to 800 residues: Phenylalanine--tRNA ligase beta subunit (800 aa).

One can recognise a tRNA-binding domain in the interval 39-154 (TKDIKKLVVG…EAVKPGTDAL (116 aa)). Residues 408–483 (SFVTPIKITA…RIYGYDDIPS (76 aa)) form the B5 domain. Positions 461, 467, 470, and 471 each coordinate Mg(2+). An FDX-ACB domain is found at 708–800 (PRFPGVTRDI…ALKKHGAIIR (93 aa)).

This sequence belongs to the phenylalanyl-tRNA synthetase beta subunit family. Type 1 subfamily. Tetramer of two alpha and two beta subunits. Requires Mg(2+) as cofactor.

The protein localises to the cytoplasm. The catalysed reaction is tRNA(Phe) + L-phenylalanine + ATP = L-phenylalanyl-tRNA(Phe) + AMP + diphosphate + H(+). The protein is Phenylalanine--tRNA ligase beta subunit of Staphylococcus epidermidis (strain ATCC 35984 / DSM 28319 / BCRC 17069 / CCUG 31568 / BM 3577 / RP62A).